The following is a 606-amino-acid chain: Dihydroxy-acid dehydratase ilvC, mitochondrial (606 aa).

Cys-84 is a binding site for [2Fe-2S] cluster. Asp-116 is a binding site for Mg(2+). Residue Cys-157 coordinates [2Fe-2S] cluster. Asp-158 contributes to the Mg(2+) binding site. Residue Cys-232 participates in [2Fe-2S] cluster binding. Residue Glu-485 participates in Mg(2+) binding. Ser-511 serves as the catalytic Proton acceptor.

It belongs to the IlvD/Edd family. [2Fe-2S] cluster is required as a cofactor. Mg(2+) serves as cofactor.

It localises to the mitochondrion. It catalyses the reaction (2R)-2,3-dihydroxy-3-methylbutanoate = 3-methyl-2-oxobutanoate + H2O. The catalysed reaction is (2R,3R)-2,3-dihydroxy-3-methylpentanoate = (S)-3-methyl-2-oxopentanoate + H2O. The protein operates within amino-acid biosynthesis; L-isoleucine biosynthesis; L-isoleucine from 2-oxobutanoate: step 3/4. Its pathway is amino-acid biosynthesis; L-valine biosynthesis; L-valine from pyruvate: step 3/4. DHAD activity is inhibited in dose-dependent manner by 2-hydroxy-3-methylbutyric acid with an IC(50) of about 8 mM. In terms of biological role, dihydroxyacid dehydratase that catalyzes the third step in the common pathway leading to biosynthesis of branched-chain amino acids. Catalyzes the dehydration of (2R,3R)-2,3-dihydroxy-3-methylpentanoate (2,3-dihydroxy-3-methylvalerate) into 2-oxo-3-methylpentanoate (2-oxo-3-methylvalerate) and of (2R)-2,3-dihydroxy-3-methylbutanoate (2,3-dihydroxyisovalerate) into 2-oxo-3-methylbutanoate (2-oxoisovalerate), the penultimate precursor to L-isoleucine and L-valine, respectively. IlvC and the branched-chain amino acid biosynthesis are crucial for virulence and may be a potential target to develop antifungal agents. This Aspergillus fumigatus (strain ATCC MYA-4609 / CBS 101355 / FGSC A1100 / Af293) (Neosartorya fumigata) protein is Dihydroxy-acid dehydratase ilvC, mitochondrial.